The following is a 354-amino-acid chain: 3'-5' exonuclease (354 aa).

The tract at residues 1–120 is disordered; the sequence is MEKYLIKMPI…PSPEKEKPEK (120 aa). Composition is skewed to basic and acidic residues over residues 13-23, 36-50, and 71-91; these read KASEVPKDKAV, TKND…KENA, and KNLD…ENPP. Phosphoserine is present on residues Ser104, Ser110, and Ser112. The region spanning 146–314 is the 3'-5' exonuclease domain; sequence VLQWVEKQKD…GQVIYRELER (169 aa). Mg(2+)-binding residues include Asp163, Glu165, and Asp301.

Belongs to the WRNexo family.

The protein resides in the nucleus. Its function is as follows. Has exonuclease activity on both single-stranded and duplex templates bearing overhangs, but not blunt ended duplex DNA, and cleaves in a 3'-5' direction. Essential for the formation of DNA replication focal centers. Has an important role in maintaining genome stability. This is 3'-5' exonuclease from Drosophila erecta (Fruit fly).